The chain runs to 245 residues: Biosynthetic peptidoglycan transglycosylase (245 aa).

A helical membrane pass occupies residues Phe-10–Leu-30. The disordered stretch occupies residues Asp-224–Gln-245. Positions Gly-226–Pro-239 are enriched in pro residues.

It belongs to the glycosyltransferase 51 family.

The protein resides in the cell inner membrane. The catalysed reaction is [GlcNAc-(1-&gt;4)-Mur2Ac(oyl-L-Ala-gamma-D-Glu-L-Lys-D-Ala-D-Ala)](n)-di-trans,octa-cis-undecaprenyl diphosphate + beta-D-GlcNAc-(1-&gt;4)-Mur2Ac(oyl-L-Ala-gamma-D-Glu-L-Lys-D-Ala-D-Ala)-di-trans,octa-cis-undecaprenyl diphosphate = [GlcNAc-(1-&gt;4)-Mur2Ac(oyl-L-Ala-gamma-D-Glu-L-Lys-D-Ala-D-Ala)](n+1)-di-trans,octa-cis-undecaprenyl diphosphate + di-trans,octa-cis-undecaprenyl diphosphate + H(+). It functions in the pathway cell wall biogenesis; peptidoglycan biosynthesis. Peptidoglycan polymerase that catalyzes glycan chain elongation from lipid-linked precursors. The protein is Biosynthetic peptidoglycan transglycosylase of Alcanivorax borkumensis (strain ATCC 700651 / DSM 11573 / NCIMB 13689 / SK2).